The primary structure comprises 203 residues: Dual-action ribosomal maturation protein DarP (203 aa).

Disordered regions lie at residues 1-31 and 182-203; these read MPPM…SKSQ and GGAS…DDEA. The span at 186 to 203 shows a compositional bias: acidic residues; that stretch reads DSDDEAADDAGDDHDDEA.

The protein belongs to the DarP family.

It is found in the cytoplasm. Its function is as follows. Member of a network of 50S ribosomal subunit biogenesis factors which assembles along the 30S-50S interface, preventing incorrect 23S rRNA structures from forming. Promotes peptidyl transferase center (PTC) maturation. This chain is Dual-action ribosomal maturation protein DarP, found in Burkholderia cenocepacia (strain HI2424).